The primary structure comprises 103 residues: Large ribosomal subunit protein uL24 (103 aa).

It belongs to the universal ribosomal protein uL24 family. Part of the 50S ribosomal subunit.

One of two assembly initiator proteins, it binds directly to the 5'-end of the 23S rRNA, where it nucleates assembly of the 50S subunit. Its function is as follows. One of the proteins that surrounds the polypeptide exit tunnel on the outside of the subunit. This chain is Large ribosomal subunit protein uL24, found in Vesicomyosocius okutanii subsp. Calyptogena okutanii (strain HA).